A 106-amino-acid chain; its full sequence is ATP-dependent Clp protease adapter protein ClpS (106 aa).

Belongs to the ClpS family. In terms of assembly, binds to the N-terminal domain of the chaperone ClpA.

Functionally, involved in the modulation of the specificity of the ClpAP-mediated ATP-dependent protein degradation. The polypeptide is ATP-dependent Clp protease adapter protein ClpS (Salmonella arizonae (strain ATCC BAA-731 / CDC346-86 / RSK2980)).